The primary structure comprises 239 residues: Ubiquinone biosynthesis O-methyltransferase (239 aa).

Arg-45, Gly-64, Asp-85, and Met-129 together coordinate S-adenosyl-L-methionine.

It belongs to the methyltransferase superfamily. UbiG/COQ3 family.

It carries out the reaction a 3-demethylubiquinol + S-adenosyl-L-methionine = a ubiquinol + S-adenosyl-L-homocysteine + H(+). It catalyses the reaction a 3-(all-trans-polyprenyl)benzene-1,2-diol + S-adenosyl-L-methionine = a 2-methoxy-6-(all-trans-polyprenyl)phenol + S-adenosyl-L-homocysteine + H(+). It functions in the pathway cofactor biosynthesis; ubiquinone biosynthesis. In terms of biological role, O-methyltransferase that catalyzes the 2 O-methylation steps in the ubiquinone biosynthetic pathway. This chain is Ubiquinone biosynthesis O-methyltransferase, found in Nitrosospira multiformis (strain ATCC 25196 / NCIMB 11849 / C 71).